A 375-amino-acid polypeptide reads, in one-letter code: Carbamoyl phosphate synthase small chain (375 aa).

The segment at 1-180 is CPSase; the sequence is MSKALLVLED…DAYVVEPKGK (180 aa). Residues serine 46, glycine 232, and glycine 234 each coordinate L-glutamine. A Glutamine amidotransferase type-1 domain is found at 184-375; sequence TVAALDLGIK…SFVELMAAQR (192 aa). Residue cysteine 260 is the Nucleophile of the active site. Residues phenylalanine 261, glutamine 264, asparagine 302, glycine 304, and phenylalanine 305 each coordinate L-glutamine. Residues histidine 350 and glutamate 352 contribute to the active site.

The protein belongs to the CarA family. In terms of assembly, composed of two chains; the small (or glutamine) chain promotes the hydrolysis of glutamine to ammonia, which is used by the large (or ammonia) chain to synthesize carbamoyl phosphate. Tetramer of heterodimers (alpha,beta)4.

The enzyme catalyses hydrogencarbonate + L-glutamine + 2 ATP + H2O = carbamoyl phosphate + L-glutamate + 2 ADP + phosphate + 2 H(+). It catalyses the reaction L-glutamine + H2O = L-glutamate + NH4(+). It functions in the pathway amino-acid biosynthesis; L-arginine biosynthesis; carbamoyl phosphate from bicarbonate: step 1/1. It participates in pyrimidine metabolism; UMP biosynthesis via de novo pathway; (S)-dihydroorotate from bicarbonate: step 1/3. In terms of biological role, small subunit of the glutamine-dependent carbamoyl phosphate synthetase (CPSase). CPSase catalyzes the formation of carbamoyl phosphate from the ammonia moiety of glutamine, carbonate, and phosphate donated by ATP, constituting the first step of 2 biosynthetic pathways, one leading to arginine and/or urea and the other to pyrimidine nucleotides. The small subunit (glutamine amidotransferase) binds and cleaves glutamine to supply the large subunit with the substrate ammonia. The sequence is that of Carbamoyl phosphate synthase small chain from Mycobacterium leprae (strain TN).